A 122-amino-acid chain; its full sequence is Large ribosomal subunit protein uL14c (122 aa).

Belongs to the universal ribosomal protein uL14 family. In terms of assembly, part of the 50S ribosomal subunit.

The protein localises to the plastid. The protein resides in the chloroplast. Functionally, binds to 23S rRNA. This is Large ribosomal subunit protein uL14c from Carica papaya (Papaya).